Consider the following 365-residue polypeptide: MRAIIIGIGQCGGKIADIFSLVDFEAIAINTSRGDLEYLKHIPQDKRILIGESIVGGKGVNANPVLGREAMKRDLPMVMKKINSMVGYEDVDIFFLTFGFGGGTGAGGTPVLAEALKEEYPDSLVVAIGALPLKEEGIRPTINAAITIDKLSKVVDSIIAIDNNKLKESDEDISQAYERINYTIVERIASLLALIDVPGEQTLDASDLKFVLRAMGSFATVGYAKADAEKVKSLSRLIIRSFENEGLYLDVSLESALYGLVAIHGPPEVLKAKDIFEALNELTQRIRGKQIFRGFYPDPRERSVEVVTLLSGIYESKSIEDIILTAKKYAREFMKAKEEGEAKKRELLSGLPDFDDVYSGEESEG.

GTP is bound by residues Gln-10–Lys-14, Gly-103–Gly-105, Glu-136, Asn-163, and Asn-181.

The protein belongs to the CetZ family.

Its subcellular location is the cytoplasm. In terms of biological role, involved in cell shape control. This Pyrococcus abyssi (strain GE5 / Orsay) protein is Tubulin-like protein CetZ.